The chain runs to 250 residues: uncharacterized protein (250 aa).

Positions 7 to 244 constitute an ABC transporter domain; that stretch reads LKVEDLHVYR…YKKECGKCYK (238 aa). Residue 39-46 coordinates ATP; the sequence is GPNGAGKS.

The protein belongs to the ABC transporter superfamily.

This is an uncharacterized protein from Methanocaldococcus jannaschii (strain ATCC 43067 / DSM 2661 / JAL-1 / JCM 10045 / NBRC 100440) (Methanococcus jannaschii).